Reading from the N-terminus, the 229-residue chain is Putative N-acetylmannosamine-6-phosphate 2-epimerase (229 aa).

Belongs to the NanE family.

It carries out the reaction an N-acyl-D-glucosamine 6-phosphate = an N-acyl-D-mannosamine 6-phosphate. The protein operates within amino-sugar metabolism; N-acetylneuraminate degradation; D-fructose 6-phosphate from N-acetylneuraminate: step 3/5. Its function is as follows. Converts N-acetylmannosamine-6-phosphate (ManNAc-6-P) to N-acetylglucosamine-6-phosphate (GlcNAc-6-P). This chain is Putative N-acetylmannosamine-6-phosphate 2-epimerase, found in Actinobacillus pleuropneumoniae serotype 5b (strain L20).